A 531-amino-acid polypeptide reads, in one-letter code: Cytochrome P450 monooxygenase acuC (531 aa).

The chain crosses the membrane as a helical span at residues 3-23 (PIVWLLGGAIALLVVVIRAAW). Cysteine 447 serves as a coordination point for heme.

It belongs to the cytochrome P450 family. The cofactor is heme.

The protein localises to the endoplasmic reticulum membrane. It catalyses the reaction 3-methylphenol + reduced [NADPH--hemoprotein reductase] + O2 = 3-hydroxybenzyl alcohol + oxidized [NADPH--hemoprotein reductase] + H2O + H(+). It participates in secondary metabolite biosynthesis. Cytochrome P450 monooxygenase; part of the gene cluster that mediates the biosynthesis of aculins. The pathway begins with the synthesis of 6-methylsalicylic acid by the polyketide synthase (PKS) acuA via condensation of acetate and malonate units. The 6-methylsalicylic acid decarboxylase acuB then catalyzes the decarboxylation of 6-methylsalicylic acid to yield m-cresol (also known as 3-methylphenol). These first reactions occur in the cytosol. The intermediate m-cresol is then transported into the endoplasmic reticulum where the cytochrome P450 monooxygenase acuC converts it to m-hydroxybenzyl alcohol, which is further converted to gentisyl alcohol by the cytochrome P450 monooxygenase acuD. Gentisyl alcohol is further oxidized by the oxidoreductase acuE that probably catalyzes hydroxylation of the aromatic ring. The aromatic system might then be opened by oxidation through a Baeyer-Villiger type of oxidation, which could be catalyzed by acuF, with the carboxylic acid at C-1 subsequently reduced to an aldehyde by acuG. Subsequently, a hemiacetal is formed, before the dehydrogenase acuH would reduce the double bond between C-4 and C-6. Finally, keto-enol tautomerism results in formation of aculinic acid, which exists as two diastereomers (both R/S configurations at C-1) by non-enzymatic hemiacetal formation. The carboxypeptidase acuI could be involved in the linking of aculinic acid to an aculene A moiety produced by the aculene biosynthesis cluster and which leads to the production of aculin A. AcuI may also be involved in the attachment of proline to aculinic acid to form epi-aculins A and B. In Aspergillus aculeatus (strain ATCC 16872 / CBS 172.66 / WB 5094), this protein is Cytochrome P450 monooxygenase acuC.